Here is a 465-residue protein sequence, read N- to C-terminus: Hexokinase type 1 (465 aa).

A Hexokinase domain is found at 8 to 447; it reads EEDFPEVYKV…CGVGAAIMAG (440 aa). The hexokinase small subdomain stretch occupies residues 65-197; sequence TGRERGQFLA…EISVDVMGII (133 aa). Residue Lys-88 coordinates ATP. A glucose-binding region spans residues 139 to 165; that stretch reads PLGIAFAFTLKKLALDVGILVSWTKEF. The interval 198–436 is hexokinase large subdomain; the sequence is NVGAGSLLAL…YNFEFVITQD (239 aa).

This sequence belongs to the hexokinase family.

It carries out the reaction a D-hexose + ATP = a D-hexose 6-phosphate + ADP + H(+). The catalysed reaction is D-mannose + ATP = D-mannose 6-phosphate + ADP + H(+). It catalyses the reaction D-fructose + ATP = D-fructose 6-phosphate + ADP + H(+). The enzyme catalyses D-glucose + ATP = D-glucose 6-phosphate + ADP + H(+). It participates in carbohydrate metabolism; hexose metabolism. The protein operates within carbohydrate degradation; glycolysis; D-glyceraldehyde 3-phosphate and glycerone phosphate from D-glucose: step 1/4. Catalyzes the phosphorylation of various hexoses to hexose 6-phosphate. The chain is Hexokinase type 1 (Hex-t1) from Drosophila melanogaster (Fruit fly).